The following is an 804-amino-acid chain: Leucine--tRNA ligase (804 aa).

The 'HIGH' region signature appears at 40–51 (PYPSGAGLHVGH). The 'KMSKS' region motif lies at 576–580 (KMSKS). Lys579 provides a ligand contact to ATP.

It belongs to the class-I aminoacyl-tRNA synthetase family.

Its subcellular location is the cytoplasm. The catalysed reaction is tRNA(Leu) + L-leucine + ATP = L-leucyl-tRNA(Leu) + AMP + diphosphate. The sequence is that of Leucine--tRNA ligase from Staphylococcus aureus (strain MRSA252).